Here is a 71-residue protein sequence, read N- to C-terminus: Defensin-like protein 292 (71 aa).

Intrachain disulfides connect cysteine 44–cysteine 64, cysteine 50–cysteine 69, and cysteine 56–cysteine 71.

It belongs to the DEFL family.

This is Defensin-like protein 292 from Arabidopsis thaliana (Mouse-ear cress).